We begin with the raw amino-acid sequence, 77 residues long: Large ribosomal subunit protein bL31 (77 aa).

Belongs to the bacterial ribosomal protein bL31 family. Type A subfamily. Part of the 50S ribosomal subunit.

Functionally, binds the 23S rRNA. This Paramagnetospirillum magneticum (strain ATCC 700264 / AMB-1) (Magnetospirillum magneticum) protein is Large ribosomal subunit protein bL31.